The following is a 1343-amino-acid chain: DNA-directed RNA polymerase subunit beta (1343 aa).

Belongs to the RNA polymerase beta chain family. The RNAP catalytic core consists of 2 alpha, 1 beta, 1 beta' and 1 omega subunit. When a sigma factor is associated with the core the holoenzyme is formed, which can initiate transcription.

It catalyses the reaction RNA(n) + a ribonucleoside 5'-triphosphate = RNA(n+1) + diphosphate. Functionally, DNA-dependent RNA polymerase catalyzes the transcription of DNA into RNA using the four ribonucleoside triphosphates as substrates. The polypeptide is DNA-directed RNA polymerase subunit beta (Haemophilus influenzae (strain 86-028NP)).